Consider the following 473-residue polypeptide: Photosystem II CP43 reaction center protein (473 aa).

A propeptide spanning residues 1–14 is cleaved from the precursor; it reads MKTLYSLRRFYPVE. Residue T15 is modified to N-acetylthreonine. At T15 the chain carries Phosphothreonine. 5 consecutive transmembrane segments (helical) span residues 69–93, 134–155, 178–200, 255–275, and 291–312; these read LFEV…PHLA, LLGP…KDRN, KALY…RKIT, KPFA…LSYS, and WFNN…ASQA. [CaMn4O5] cluster is bound at residue E367. Residues 447–471 traverse the membrane as a helical segment; that stretch reads RARAAAAGFEKGIDRDFEPVLSMTP.

Belongs to the PsbB/PsbC family. PsbC subfamily. As to quaternary structure, PSII is composed of 1 copy each of membrane proteins PsbA, PsbB, PsbC, PsbD, PsbE, PsbF, PsbH, PsbI, PsbJ, PsbK, PsbL, PsbM, PsbT, PsbX, PsbY, PsbZ, Psb30/Ycf12, at least 3 peripheral proteins of the oxygen-evolving complex and a large number of cofactors. It forms dimeric complexes. It depends on Binds multiple chlorophylls and provides some of the ligands for the Ca-4Mn-5O cluster of the oxygen-evolving complex. It may also provide a ligand for a Cl- that is required for oxygen evolution. PSII binds additional chlorophylls, carotenoids and specific lipids. as a cofactor.

It is found in the plastid. Its subcellular location is the chloroplast thylakoid membrane. Its function is as follows. One of the components of the core complex of photosystem II (PSII). It binds chlorophyll and helps catalyze the primary light-induced photochemical processes of PSII. PSII is a light-driven water:plastoquinone oxidoreductase, using light energy to abstract electrons from H(2)O, generating O(2) and a proton gradient subsequently used for ATP formation. This Calycanthus floridus var. glaucus (Eastern sweetshrub) protein is Photosystem II CP43 reaction center protein.